The following is a 162-amino-acid chain: G/U mismatch-specific DNA glycosylase (162 aa).

It belongs to the uracil-DNA glycosylase (UDG) superfamily. TDG/mug family. Binds DNA as a monomer.

Its subcellular location is the cytoplasm. The catalysed reaction is Specifically hydrolyzes mismatched double-stranded DNA and polynucleotides, releasing free uracil.. Functionally, excises ethenocytosine and uracil, which can arise by alkylation or deamination of cytosine, respectively, from the corresponding mispairs with guanine in ds-DNA. It is capable of hydrolyzing the carbon-nitrogen bond between the sugar-phosphate backbone of the DNA and the mispaired base. The complementary strand guanine functions in substrate recognition. Required for DNA damage lesion repair in stationary-phase cells. The protein is G/U mismatch-specific DNA glycosylase of Serratia proteamaculans (strain 568).